The following is a 575-amino-acid chain: U3 small nucleolar RNA-associated protein 9 (575 aa).

2 stretches are compositionally biased toward basic and acidic residues: residues 340–355 (NEKNNADEADQKKLEE) and 364–375 (VQHEKKETETKI). The tract at residues 340–375 (NEKNNADEADQKKLEEKEEEAQPEVQHEKKETETKI) is disordered. Phosphoserine occurs at positions 547 and 564.

In terms of assembly, interacts with snoRNA U3. Interacts with MPP10. Component of the ribosomal small subunit (SSU) processome composed of at least 40 protein subunits and snoRNA U3. In the absence of snoRNA3, forms a complex with other t-UTPs. This complex can associate with pre-18S ribosomal RNAs.

The protein resides in the nucleus. The protein localises to the nucleolus. In terms of biological role, involved in nucleolar processing of pre-18S ribosomal RNA. Required for optimal pre-ribosomal RNA transcription by RNA polymerase I together with a subset of U3 proteins required for transcription (t-UTPs). The polypeptide is U3 small nucleolar RNA-associated protein 9 (UTP9) (Saccharomyces cerevisiae (strain ATCC 204508 / S288c) (Baker's yeast)).